A 665-amino-acid polypeptide reads, in one-letter code: RNA polymerase II-associated protein 3 (665 aa).

Thr2 carries the post-translational modification N-acetylthreonine. The stretch at 8–41 (IELQLQVKQNAEELQDFMRDLENWEKDIKQKDME) is one TPR 1 repeat. The disordered stretch occupies residues 37–82 (QKDMELRRQNGVPEENLPPIRNGNFRKKKKGKAKESSKKTREENTK). Over residues 69–82 (AKESSKKTREENTK) the composition is skewed to basic and acidic residues. Phosphoserine occurs at positions 87, 116, 119, and 121. Positions 109 to 129 (DSTHESLSQESESEEDGIHVD) are disordered. 6 TPR repeats span residues 133–166 (ALVL…DPYN), 168–200 (VLPT…NRSY), 201–234 (TKAY…EPNN), 282–315 (AISE…DGAN), 317–349 (LLPA…DGSY), and 350–383 (SKAF…EPGN). Ser481 carries the post-translational modification Phosphoserine. Lys498 participates in a covalent cross-link: Glycyl lysine isopeptide (Lys-Gly) (interchain with G-Cter in SUMO2).

It belongs to the RPAP3 family. Tightly associated with the RNA polymerase II complex. Component of the R2TP complex composed at least of RUVBL1, RUVBL2, RPAP3 and PIHD1. Component of the PAQosome complex which is responsible for the biogenesis of several protein complexes and which consists of R2TP complex members RUVBL1, RUVBL2, RPAP3 and PIH1D1, URI complex members PFDN2, PFDN6, PDRG1, UXT and URI1 as well as ASDURF, POLR2E and DNAAF10/WDR92. Interacts with PIH1D1. Interacts with TSC1 and TSC2. Interacts with PRPF8 and EFTUD2 in a ZNHIT2-dependent manner.

Its function is as follows. Forms an interface between the RNA polymerase II enzyme and chaperone/scaffolding protein, suggesting that it is required to connect RNA polymerase II to regulators of protein complex formation. This chain is RNA polymerase II-associated protein 3 (RPAP3), found in Homo sapiens (Human).